A 148-amino-acid chain; its full sequence is Nucleoside diphosphate kinase (148 aa).

ATP-binding residues include Lys-9, Phe-57, Arg-85, Thr-91, Arg-102, and Asn-112. The residue at position 91 (Thr-91) is a Phosphothreonine. Residue His-115 is the Pros-phosphohistidine intermediate of the active site. Ser-122 carries the phosphoserine modification.

It belongs to the NDK family. In terms of assembly, homotetramer. It depends on Mg(2+) as a cofactor.

It is found in the cytoplasm. It carries out the reaction a 2'-deoxyribonucleoside 5'-diphosphate + ATP = a 2'-deoxyribonucleoside 5'-triphosphate + ADP. It catalyses the reaction a ribonucleoside 5'-diphosphate + ATP = a ribonucleoside 5'-triphosphate + ADP. Major role in the synthesis of nucleoside triphosphates other than ATP. The ATP gamma phosphate is transferred to the NDP beta phosphate via a ping-pong mechanism, using a phosphorylated active-site intermediate. This is Nucleoside diphosphate kinase from Oceanobacillus iheyensis (strain DSM 14371 / CIP 107618 / JCM 11309 / KCTC 3954 / HTE831).